Here is a 212-residue protein sequence, read N- to C-terminus: Calaxin (212 aa).

EF-hand domains follow at residues threonine 65–glycine 100, threonine 101–lysine 136, and glycine 146–leucine 181. Ca(2+) is bound by residues aspartate 78, aspartate 80, aspartate 82, cysteine 84, glutamate 89, aspartate 114, asparagine 116, aspartate 118, glutamate 125, aspartate 159, aspartate 161, aspartate 163, lysine 165, and aspartate 170.

Component of the outer dynein arm-docking complex along with ODAD1, ODAD2, ODAD3 and ODAD4.

It localises to the cytoplasm. Its subcellular location is the cytoskeleton. The protein localises to the cilium axoneme. The protein resides in the cell projection. It is found in the cilium. It localises to the flagellum. In terms of biological role, component of the outer dynein arm-docking complex (ODA-DC) that mediates outer dynein arms (ODA) binding onto the doublet microtubule. Seems to regulate the assembly of both ODAs and their axonemal docking complex onto ciliary microtubules. Regulates ciliary and flagellar motility and is required for cilia-driven determination of body laterality. The protein is Calaxin (Clxn) of Mus musculus (Mouse).